The chain runs to 167 residues: Translationally-controlled tumor protein homolog (167 aa).

In terms of domain architecture, TCTP spans 1–167; it reads MIIFTDVISG…WKHGVSEDKI (167 aa).

It belongs to the TCTP family.

The protein resides in the cytoplasm. Its subcellular location is the cytoskeleton. Involved in protein synthesis. Involved in microtubule stabilization. The chain is Translationally-controlled tumor protein homolog from Debaryomyces hansenii (strain ATCC 36239 / CBS 767 / BCRC 21394 / JCM 1990 / NBRC 0083 / IGC 2968) (Yeast).